Here is a 583-residue protein sequence, read N- to C-terminus: Aspartate--tRNA ligase (583 aa).

Residue Glu169 coordinates L-aspartate. The aspartate stretch occupies residues 193–196 (QLFK). Arg215 contributes to the L-aspartate binding site. ATP is bound by residues 215-217 (RDE) and Gln224. His443 provides a ligand contact to L-aspartate. ATP is bound at residue Glu477. Position 484 (Arg484) interacts with L-aspartate. 529-532 (GIDR) lines the ATP pocket.

Belongs to the class-II aminoacyl-tRNA synthetase family. Type 1 subfamily. Homodimer.

Its subcellular location is the cytoplasm. It catalyses the reaction tRNA(Asp) + L-aspartate + ATP = L-aspartyl-tRNA(Asp) + AMP + diphosphate. In terms of biological role, catalyzes the attachment of L-aspartate to tRNA(Asp) in a two-step reaction: L-aspartate is first activated by ATP to form Asp-AMP and then transferred to the acceptor end of tRNA(Asp). The chain is Aspartate--tRNA ligase from Stenotrophomonas maltophilia (strain R551-3).